We begin with the raw amino-acid sequence, 399 residues long: Probable aspartate/prephenate aminotransferase (399 aa).

L-aspartate contacts are provided by G39, W125, and N175. N6-(pyridoxal phosphate)lysine is present on K239. R375 contributes to the L-aspartate binding site.

Belongs to the class-I pyridoxal-phosphate-dependent aminotransferase family. Homodimer. The cofactor is pyridoxal 5'-phosphate.

Its subcellular location is the cytoplasm. The enzyme catalyses L-aspartate + 2-oxoglutarate = oxaloacetate + L-glutamate. It carries out the reaction L-arogenate + 2-oxoglutarate = prephenate + L-glutamate. Its function is as follows. Catalyzes the reversible conversion of aspartate and 2-oxoglutarate to glutamate and oxaloacetate. Can also transaminate prephenate in the presence of glutamate. The protein is Probable aspartate/prephenate aminotransferase (aatA) of Rickettsia typhi (strain ATCC VR-144 / Wilmington).